The sequence spans 396 residues: Subtilisin-like protease 5 (396 aa).

An N-terminal signal peptide occupies residues 1-20; the sequence is MTGFFTFLSFSLAALSVTNA. A propeptide spanning residues 21–116 is cleaved from the precursor; it reads AHILSVPKGA…VEPDAIISQH (96 aa). The Inhibitor I9 domain maps to 37-113; the sequence is YIVVMKDDTS…VAFVEPDAII (77 aa). Asn-63 carries N-linked (GlcNAc...) asparagine glycosylation. The 272-residue stretch at 125 to 396 folds into the Peptidase S8 domain; it reads PWGLSRLSNR…SRLLYNGSGR (272 aa). Catalysis depends on charge relay system residues Asp-156 and His-187. 2 N-linked (GlcNAc...) asparagine glycosylation sites follow: Asn-230 and Asn-248. Ser-342 (charge relay system) is an active-site residue. Over residues 376 to 389 the composition is skewed to polar residues; that stretch reads PTIRNPGPDTTSRL. Residues 376–396 are disordered; it reads PTIRNPGPDTTSRLLYNGSGR. The N-linked (GlcNAc...) asparagine glycan is linked to Asn-392.

This sequence belongs to the peptidase S8 family.

It localises to the secreted. Functionally, secreted subtilisin-like serine protease with keratinolytic activity that contributes to pathogenicity. The protein is Subtilisin-like protease 5 (SUB5) of Trichophyton tonsurans (Scalp ringworm fungus).